The following is a 207-amino-acid chain: Twist-related protein 1 (207 aa).

Positions 1–18 (MMQDVSSSPVSPADDSLS) are enriched in low complexity. Positions 1 to 110 (MMQDVSSSPV…GGGSPQSYEE (110 aa)) are disordered. The span at 34–43 (RGGRKRRSSR) shows a compositional bias: basic residues. Gly residues-rich tracts occupy residues 46–65 (AGGG…GGDE) and 80–104 (GCGG…GGGS). The bHLH domain occupies 113-164 (TQRVMANVRERQRTQSLNEAFAALRKIIPTLPSDKLSKIQTLKLAARYIDFL). Residues 166–196 (QVLQSDELDSKMASCSYVAHERLSYAFSVWR) are sufficient for transactivation activity.

In terms of assembly, efficient DNA binding requires dimerization with another bHLH protein. Homodimer or heterodimer with E proteins such as TCF3. ID1 binds preferentially to TCF3 but does not interact efficiently with TWIST1 so ID1 levels control the amount of TCF3 available to dimerize with TWIST and thus determine the type of dimer formed.

It localises to the nucleus. In terms of biological role, acts as a transcriptional regulator. Inhibits myogenesis by sequestrating E proteins, inhibiting trans-activation by MEF2, and inhibiting DNA-binding by MYOD1 through physical interaction. This interaction probably involves the basic domains of both proteins. Also represses expression of pro-inflammatory cytokines such as TNFA and IL1B. Regulates cranial suture patterning and fusion. Activates transcription as a heterodimer with E proteins. Regulates gene expression differentially, depending on dimer composition. Homodimers induce expression of FGFR2 and POSTN while heterodimers repress FGFR2 and POSTN expression and induce THBS1 expression. Heterodimerization is also required for osteoblast differentiation. Represses the activity of the circadian transcriptional activator: NPAS2-BMAL1 heterodimer. The chain is Twist-related protein 1 (TWIST1) from Cebus capucinus (White-faced sapajou).